We begin with the raw amino-acid sequence, 136 residues long: Large ribosomal subunit protein bL17 (136 aa).

It belongs to the bacterial ribosomal protein bL17 family. Part of the 50S ribosomal subunit. Contacts protein L32.

The protein is Large ribosomal subunit protein bL17 of Akkermansia muciniphila (strain ATCC BAA-835 / DSM 22959 / JCM 33894 / BCRC 81048 / CCUG 64013 / CIP 107961 / Muc).